A 348-amino-acid polypeptide reads, in one-letter code: Nicotinate-nucleotide--dimethylbenzimidazole phosphoribosyltransferase (348 aa).

The active-site Proton acceptor is Glu316.

The protein belongs to the CobT family.

The enzyme catalyses 5,6-dimethylbenzimidazole + nicotinate beta-D-ribonucleotide = alpha-ribazole 5'-phosphate + nicotinate + H(+). Its pathway is nucleoside biosynthesis; alpha-ribazole biosynthesis; alpha-ribazole from 5,6-dimethylbenzimidazole: step 1/2. In terms of biological role, catalyzes the synthesis of alpha-ribazole-5'-phosphate from nicotinate mononucleotide (NAMN) and 5,6-dimethylbenzimidazole (DMB). The polypeptide is Nicotinate-nucleotide--dimethylbenzimidazole phosphoribosyltransferase (Xanthomonas oryzae pv. oryzae (strain PXO99A)).